Consider the following 151-residue polypeptide: Large ribosomal subunit protein bL28c (151 aa).

The transit peptide at 1-74 (MATMVAGISL…PFKPSLQPVA (74 aa)) directs the protein to the chloroplast.

This sequence belongs to the bacterial ribosomal protein bL28 family. In terms of assembly, part of the 50S ribosomal subunit.

The protein resides in the plastid. It localises to the chloroplast. The protein is Large ribosomal subunit protein bL28c (RPL28) of Nicotiana tabacum (Common tobacco).